The following is a 663-amino-acid chain: UvrABC system protein B (663 aa).

Basic and acidic residues predominate over residues 1–10 (MIDKRDDKPF). The tract at residues 1–23 (MIDKRDDKPFKLKSKYKPSGDQP) is disordered. Residues 31-271 (DNIEGGEKAQ…EQSIAKIQAE (241 aa)) enclose the Helicase ATP-binding domain. 44–51 (GATGTGKT) contributes to the ATP binding site. The Beta-hairpin motif lies at 97–120 (YYDYYQPEAYVPSSDTYIEKDSSV). The Helicase C-terminal domain occupies 435-601 (QMDDLLGEIN…TIKKDIRGLI (167 aa)). The 36-residue stretch at 627–662 (KEAINALQKQMQEAAELLDFELAAQMRDLILELKLM) folds into the UVR domain.

Belongs to the UvrB family. In terms of assembly, forms a heterotetramer with UvrA during the search for lesions. Interacts with UvrC in an incision complex.

It is found in the cytoplasm. In terms of biological role, the UvrABC repair system catalyzes the recognition and processing of DNA lesions. A damage recognition complex composed of 2 UvrA and 2 UvrB subunits scans DNA for abnormalities. Upon binding of the UvrA(2)B(2) complex to a putative damaged site, the DNA wraps around one UvrB monomer. DNA wrap is dependent on ATP binding by UvrB and probably causes local melting of the DNA helix, facilitating insertion of UvrB beta-hairpin between the DNA strands. Then UvrB probes one DNA strand for the presence of a lesion. If a lesion is found the UvrA subunits dissociate and the UvrB-DNA preincision complex is formed. This complex is subsequently bound by UvrC and the second UvrB is released. If no lesion is found, the DNA wraps around the other UvrB subunit that will check the other stand for damage. In Streptococcus pyogenes serotype M2 (strain MGAS10270), this protein is UvrABC system protein B.